The following is a 224-amino-acid chain: MKPQDLKLPYFWEERSPQIANHVFYVPNYYSRYEEFVMPTWQELFANNGPICCELCSGNGDWVVEQALKDASVNWIAVEKRFDRVRKIWSKMGNYRVNNLLIVCGEAQTFFSHYVSDASFQKIVVNFPDPWPKFRHRKHRLFQDLFVQDMMRTLVVGGQLTLATDDYNYLVNAITVMLKYLSPGLKSPHYINVKDNYGGSWFENLWRSKGQEIFCTEFIKRVGI.

S-adenosyl-L-methionine-binding residues include E54, E79, E106, and D129. D129 is a catalytic residue. Substrate contacts are provided by K133 and D165.

This sequence belongs to the class I-like SAM-binding methyltransferase superfamily. TrmB family.

The catalysed reaction is guanosine(46) in tRNA + S-adenosyl-L-methionine = N(7)-methylguanosine(46) in tRNA + S-adenosyl-L-homocysteine. The protein operates within tRNA modification; N(7)-methylguanine-tRNA biosynthesis. Its function is as follows. Catalyzes the formation of N(7)-methylguanine at position 46 (m7G46) in tRNA. In Chlamydia trachomatis serovar D (strain ATCC VR-885 / DSM 19411 / UW-3/Cx), this protein is tRNA (guanine-N(7)-)-methyltransferase.